We begin with the raw amino-acid sequence, 142 residues long: Hemoglobin subunit alpha (142 aa).

Serine 1 carries the N-acetylserine modification. The region spanning 1 to 142 (SLSDKDKAAV…VALALAERYR (142 aa)) is the Globin domain. Histidine 59 is an O2 binding site. Histidine 88 provides a ligand contact to heme b.

This sequence belongs to the globin family. In terms of assembly, hb1 is a heterotetramer of two alpha chains and two beta chains. HbC is a heterotetramer of two alpha chains and two beta-C chains. Red blood cells.

Functionally, involved in oxygen transport from gills to the various peripheral tissues. This is Hemoglobin subunit alpha (hba) from Trematomus bernacchii (Emerald rockcod).